The sequence spans 325 residues: DNA repair and recombination protein RadA (325 aa).

Residue 107–114 (GEFGSGKT) participates in ATP binding.

It belongs to the eukaryotic RecA-like protein family.

Functionally, involved in DNA repair and in homologous recombination. Binds and assemble on single-stranded DNA to form a nucleoprotein filament. Hydrolyzes ATP in a ssDNA-dependent manner and promotes DNA strand exchange between homologous DNA molecules. The sequence is that of DNA repair and recombination protein RadA from Methanococcoides burtonii (strain DSM 6242 / NBRC 107633 / OCM 468 / ACE-M).